Here is a 115-residue protein sequence, read N- to C-terminus: Double-headed protease inhibitor, submandibular gland (115 aa).

2 consecutive Kazal-like domains span residues 6-66 (IGRE…ACDI) and 67-115 (ECTE…HGEC). 6 disulfide bridges follow: Cys12–Cys46, Cys24–Cys43, Cys32–Cys64, Cys68–Cys97, Cys75–Cys94, and Cys83–Cys115.

The protein localises to the secreted. Its function is as follows. This inhibitor is composed of two homologous actively inhibiting halves: one which inhibits trypsin, the other which inhibits elastase. The polypeptide is Double-headed protease inhibitor, submandibular gland (Vulpes vulpes (Red fox)).